Consider the following 585-residue polypeptide: Ankyrin repeat protein OPG003 (585 aa).

ANK repeat units lie at residues 66–98, 172–220, 224–256, 297–333, and 336–365; these read CGMSPLHCYVMNTRFKPSVLKILLHNGVNNFDN, DGLT…NINA, IGNTPLHTYLQQYTKHSPRVVYALLSRGADTRI, EGHHLLYLFIKHNQGYGSHAFNILRYLLDRFDIQKDE, and NTMTPLHTAFQNCNNNVASYLVYIGYDINL. Residues 554–571 form a PRANC/F-box-like region; sequence LPPEIIRNIITKLSDYHL.

The protein belongs to the orthopoxvirus OPG003 family.

May be involved in virus-host protein interaction through the ankyrin repeats and PRANC regions. The sequence is that of Ankyrin repeat protein OPG003 (OPG003) from Homo sapiens (Human).